A 747-amino-acid polypeptide reads, in one-letter code: Potassium transporter 20 (747 aa).

Residues 1–47 are Cytoplasmic-facing; sequence MSVQEDDDAAGPEVDRLRRHDSFYGDAEKVSNDKSHGTGENWARTLQ. The chain crosses the membrane as a helical span at residues 48-68; it reads LAFQSIGVVYGDVGTSPLYVY. At 69–84 the chain is on the extracellular side; the sequence is SSTFPDGVKHPDDLVG. The helical transmembrane segment at 85–105 threads the bilayer; that stretch reads VLSLMLYTLILIPMVKYVFIV. Residues 106–171 are Cytoplasmic-facing; that stretch reads LYANDNGDGG…QKLESSNAAK (66 aa). A helical membrane pass occupies residues 172–192; the sequence is IALFTITILGTSMVMGDGTLT. The Extracellular portion of the chain corresponds to 193-209; that stretch reads PAISVLSAVSGIREKAP. The chain crosses the membrane as a helical span at residues 210–230; it reads SLTQLQVVWISVPILIVLFSV. The Cytoplasmic segment spans residues 231–237; that stretch reads QRFGTDK. Residues 238 to 258 form a helical membrane-spanning segment; the sequence is VGYSFAPVISVWFVLIAGIGA. Topologically, residues 259–288 are extracellular; it reads YNLAVHEITILRAFNPMYIIDYFRRNGKEA. A helical transmembrane segment spans residues 289 to 309; the sequence is WVSLGGAVLCITGTEAMFADL. Topologically, residues 310 to 318 are cytoplasmic; the sequence is GHFNIRAIQ. The helical transmembrane segment at 319–339 threads the bilayer; that stretch reads LSFTCVLFPSVALCYMGQAAY. The Extracellular segment spans residues 340–353; it reads LRKFPEDVGDTFYK. Residues 354–374 form a helical membrane-spanning segment; sequence SLPAPLFWPVFVVAIMAAIIA. At 375 to 410 the chain is on the cytoplasmic side; it reads SQAMLSGAFAILSKALPLGCFPRVEVVHTSNKYEGQ. A helical transmembrane segment spans residues 411–431; it reads VYIPEVNFLIGVASVAITVAF. The Extracellular portion of the chain corresponds to 432 to 442; the sequence is QTTANIGNAYG. A helical membrane pass occupies residues 443-463; the sequence is ICVVMVFSITTHLMTVVMLLI. The Cytoplasmic portion of the chain corresponds to 464–469; sequence WKVRLP. A helical transmembrane segment spans residues 470 to 490; that stretch reads FIAAFYVVFTFTEFLYLSSIL. The Extracellular portion of the chain corresponds to 491 to 496; it reads SKFAEG. Residues 497–517 form a helical membrane-spanning segment; that stretch reads GYLPFCFSLVLMALMATWHYV. Over 518-747 the chain is Cytoplasmic; the sequence is HVKRYWYELD…LLKVGITYEI (230 aa).

This sequence belongs to the HAK/KUP transporter (TC 2.A.72.3) family.

The protein resides in the membrane. High-affinity potassium transporter. The polypeptide is Potassium transporter 20 (HAK20) (Oryza sativa subsp. japonica (Rice)).